The sequence spans 974 residues: Isoleucine--tRNA ligase (974 aa).

Positions 69 to 79 (PYANGALHMGH) match the 'HIGH' region motif. Glutamate 585 contacts L-isoleucyl-5'-AMP. Positions 626-630 (KMSKS) match the 'KMSKS' region motif. Residue lysine 629 coordinates ATP. Zn(2+) is bound by residues cysteine 939, cysteine 942, cysteine 959, and cysteine 962.

Belongs to the class-I aminoacyl-tRNA synthetase family. IleS type 1 subfamily. In terms of assembly, monomer. Zn(2+) serves as cofactor.

The protein resides in the cytoplasm. The catalysed reaction is tRNA(Ile) + L-isoleucine + ATP = L-isoleucyl-tRNA(Ile) + AMP + diphosphate. Functionally, catalyzes the attachment of isoleucine to tRNA(Ile). As IleRS can inadvertently accommodate and process structurally similar amino acids such as valine, to avoid such errors it has two additional distinct tRNA(Ile)-dependent editing activities. One activity is designated as 'pretransfer' editing and involves the hydrolysis of activated Val-AMP. The other activity is designated 'posttransfer' editing and involves deacylation of mischarged Val-tRNA(Ile). The sequence is that of Isoleucine--tRNA ligase from Parasynechococcus marenigrum (strain WH8102).